The primary structure comprises 133 residues: UPF0102 protein Fnod_1509 (133 aa).

The protein belongs to the UPF0102 family.

This Fervidobacterium nodosum (strain ATCC 35602 / DSM 5306 / Rt17-B1) protein is UPF0102 protein Fnod_1509.